The chain runs to 215 residues: Urease accessory protein UreG (215 aa).

Position 24 to 31 (24 to 31 (GPVGSGKT)) interacts with GTP.

The protein belongs to the SIMIBI class G3E GTPase family. UreG subfamily. Homodimer. UreD, UreF and UreG form a complex that acts as a GTP-hydrolysis-dependent molecular chaperone, activating the urease apoprotein by helping to assemble the nickel containing metallocenter of UreC. The UreE protein probably delivers the nickel.

It is found in the cytoplasm. Facilitates the functional incorporation of the urease nickel metallocenter. This process requires GTP hydrolysis, probably effectuated by UreG. This is Urease accessory protein UreG from Burkholderia orbicola (strain MC0-3).